The chain runs to 62 residues: Photosystem II reaction center protein Z (62 aa).

The next 2 helical transmembrane spans lie at 8 to 28 and 41 to 61; these read LVFILVIFSTLLVVGIPVTFA and YTGAGIWTGLVLITGLVNSFI.

The protein belongs to the PsbZ family. In terms of assembly, PSII is composed of 1 copy each of membrane proteins PsbA, PsbB, PsbC, PsbD, PsbE, PsbF, PsbH, PsbI, PsbJ, PsbK, PsbL, PsbM, PsbT, sbX, PsbY, PsbZ, Psb30/Ycf12, at least 3 peripheral proteins of the oxygen-evolving complex and a large number of cofactors. It forms dimeric complexes.

It is found in the plastid. It localises to the chloroplast thylakoid membrane. May control the interaction of photosystem II (PSII) cores with the light-harvesting antenna, regulates electron flow through the 2 photosystem reaction centers. PSII is a light-driven water plastoquinone oxidoreductase, using light energy to abstract electrons from H(2)O, generating a proton gradient subsequently used for ATP formation. The sequence is that of Photosystem II reaction center protein Z from Gracilaria tenuistipitata var. liui (Red alga).